The chain runs to 126 residues: Prefoldin subunit beta (126 aa).

This sequence belongs to the prefoldin subunit beta family. In terms of assembly, heterohexamer of two alpha and four beta subunits.

It is found in the cytoplasm. In terms of biological role, molecular chaperone capable of stabilizing a range of proteins. Seems to fulfill an ATP-independent, HSP70-like function in archaeal de novo protein folding. This chain is Prefoldin subunit beta, found in Saccharolobus islandicus (strain Y.N.15.51 / Yellowstone #2) (Sulfolobus islandicus).